Here is a 597-residue protein sequence, read N- to C-terminus: Histidine protein kinase DivJ (597 aa).

The next 6 membrane-spanning stretches (helical) occupy residues 40–57 (LGWL…LFTA), 62–81 (WPVW…SLIF), 91–109 (WLLV…LTGG), 110–125 (VGGA…VAAA), 137–158 (GAAL…GLAP), and 159–188 (AAPT…LLIG). Residues 335-553 (NMSHELRTPL…TVSVRLPVLL (219 aa)) form the Histidine kinase domain. Phosphohistidine; by autocatalysis is present on His-338. A compositionally biased stretch (pro residues) spans 561–585 (PTPPAAPEAPSAPEPAPTVEEPPPA). The interval 561–597 (PTPPAAPEAPSAPEPAPTVEEPPPASLGDNVIAFAPR) is disordered.

It localises to the cell membrane. The catalysed reaction is ATP + protein L-histidine = ADP + protein N-phospho-L-histidine.. Kinase required for the regulation of cell division and differentiation. Is part of a signal transduction pathway, activating PleD by phosphorylation. The polypeptide is Histidine protein kinase DivJ (divJ) (Caulobacter vibrioides (strain ATCC 19089 / CIP 103742 / CB 15) (Caulobacter crescentus)).